Consider the following 159-residue polypeptide: Large ribosomal subunit protein uL15 (159 aa).

Residues 1 to 39 (MKLNELSPADGSTKKRMRVGRGVGSGKGKTAGRGVKGQN) form a disordered region. Residues 21 to 35 (RGVGSGKGKTAGRGV) show a composition bias toward gly residues.

The protein belongs to the universal ribosomal protein uL15 family. As to quaternary structure, part of the 50S ribosomal subunit.

Its function is as follows. Binds to the 23S rRNA. This is Large ribosomal subunit protein uL15 from Hyphomonas neptunium (strain ATCC 15444).